The sequence spans 291 residues: Lipoyl synthase, organellar chromatophore (291 aa).

[4Fe-4S] cluster is bound by residues Cys-33, Cys-38, Cys-44, Cys-59, Cys-63, Cys-66, and Ser-274. The Radical SAM core domain occupies 45 to 263; the sequence is FAGGTATFLI…AIGELEMNFL (219 aa).

This sequence belongs to the radical SAM superfamily. Lipoyl synthase family. The cofactor is [4Fe-4S] cluster.

The protein resides in the plastid. It is found in the organellar chromatophore. It catalyses the reaction [[Fe-S] cluster scaffold protein carrying a second [4Fe-4S](2+) cluster] + N(6)-octanoyl-L-lysyl-[protein] + 2 oxidized [2Fe-2S]-[ferredoxin] + 2 S-adenosyl-L-methionine + 4 H(+) = [[Fe-S] cluster scaffold protein] + N(6)-[(R)-dihydrolipoyl]-L-lysyl-[protein] + 4 Fe(3+) + 2 hydrogen sulfide + 2 5'-deoxyadenosine + 2 L-methionine + 2 reduced [2Fe-2S]-[ferredoxin]. It participates in protein modification; protein lipoylation via endogenous pathway; protein N(6)-(lipoyl)lysine from octanoyl-[acyl-carrier-protein]: step 2/2. Catalyzes the radical-mediated insertion of two sulfur atoms into the C-6 and C-8 positions of the octanoyl moiety bound to the lipoyl domains of lipoate-dependent enzymes, thereby converting the octanoylated domains into lipoylated derivatives. In Paulinella chromatophora, this protein is Lipoyl synthase, organellar chromatophore.